The following is a 185-amino-acid chain: Ribosome-recycling factor (185 aa).

Positions 137 to 158 (NQVKKLEKDKEISEDESKKAQE) are disordered. The segment covering 140 to 158 (KKLEKDKEISEDESKKAQE) has biased composition (basic and acidic residues).

The protein belongs to the RRF family.

The protein resides in the cytoplasm. Its function is as follows. Responsible for the release of ribosomes from messenger RNA at the termination of protein biosynthesis. May increase the efficiency of translation by recycling ribosomes from one round of translation to another. The sequence is that of Ribosome-recycling factor from Helicobacter pylori (strain P12).